A 476-amino-acid chain; its full sequence is Carbamoyl phosphate synthase arginine-specific small chain (476 aa).

Residues 1–24 constitute a mitochondrion transit peptide; that stretch reads MFSHLLKPAARSAGLLGHVNRRYL. Residues 228–415 form the Glutamine amidotransferase type-1 domain; that stretch reads HVALIDCGVK…IQNVQRYKDH (188 aa). Catalysis depends on Cys-304, which acts as the Nucleophile. Catalysis depends on residues His-388 and Glu-390.

Belongs to the CarA family. Heterodimer composed of 2 chains; the small (or glutamine) chain promotes the hydrolysis of glutamine to ammonia, which is used by the large (or ammonia) chain to synthesize carbamoyl phosphate.

The protein resides in the mitochondrion matrix. It carries out the reaction hydrogencarbonate + L-glutamine + 2 ATP + H2O = carbamoyl phosphate + L-glutamate + 2 ADP + phosphate + 2 H(+). It catalyses the reaction L-glutamine + H2O = L-glutamate + NH4(+). The protein operates within amino-acid biosynthesis; L-arginine biosynthesis; carbamoyl phosphate from bicarbonate: step 1/1. Its function is as follows. Small subunit of the arginine-specific carbamoyl phosphate synthase (CPSase). CPSase catalyzes the formation of carbamoyl phosphate from the ammonia moiety of glutamine, carbonate, and phosphate donated by ATP, the first step of the arginine biosynthetic pathway. The small subunit (glutamine amidotransferase) binds and cleaves glutamine to supply the large subunit with the substrate ammonia. In Phaeosphaeria nodorum (strain SN15 / ATCC MYA-4574 / FGSC 10173) (Glume blotch fungus), this protein is Carbamoyl phosphate synthase arginine-specific small chain (CPA1).